Reading from the N-terminus, the 134-residue chain is ATP synthase epsilon chain (134 aa).

Belongs to the ATPase epsilon chain family. F-type ATPases have 2 components, CF(1) - the catalytic core - and CF(0) - the membrane proton channel. CF(1) has five subunits: alpha(3), beta(3), gamma(1), delta(1), epsilon(1). CF(0) has three main subunits: a, b and c.

The protein resides in the cell membrane. Functionally, produces ATP from ADP in the presence of a proton gradient across the membrane. This is ATP synthase epsilon chain from Ruminiclostridium cellulolyticum (strain ATCC 35319 / DSM 5812 / JCM 6584 / H10) (Clostridium cellulolyticum).